Here is a 52-residue protein sequence, read N- to C-terminus: Lantibiotic epidermin (52 aa).

The propeptide occupies 1-30; sequence MEAVKEKNDLFNLDVKVNAKESNDSGAEPR. A cross-link (lanthionine (Ser-Cys)) is located at residues 33–37; that stretch reads SKFIC. The segment at residues 38 to 41 is a cross-link (beta-methyllanthionine (Thr-Cys)); sequence TPGC. T44 is modified ((Z)-2,3-didehydrobutyrine). A cross-link (lanthionine (Ser-Cys)) is located at residues 46 to 51; it reads SFNSYC. The S-(2-aminovinyl)-D-cysteine (Ser-Cys) cross-link spans 49–52; it reads SYCC.

This sequence belongs to the type A lantibiotic family. Post-translationally, maturation of lantibiotics involves the enzymatic conversion of Thr, and Ser into dehydrated AA and the formation of thioether bonds with cysteine. The C-terminal lanthionine undergoes decarboxylation. This is followed by membrane translocation and cleavage of the modified precursor. In terms of processing, the 2,3-didehydrobutyrine is determined to be the Z-isomer.

Functionally, lanthionine-containing peptide antibiotic (lantibiotic) active on Gram-positive bacteria. The bactericidal activity of lantibiotics is based on depolarization of energized bacterial cytoplasmic membranes, initiated by the formation of aqueous transmembrane pores. The chain is Lantibiotic epidermin (epiA) from Staphylococcus epidermidis.